The chain runs to 201 residues: Thymidylate kinase (201 aa).

Residue 7 to 14 (GIDGSGKS) participates in ATP binding.

It belongs to the thymidylate kinase family.

The catalysed reaction is dTMP + ATP = dTDP + ADP. Functionally, phosphorylation of dTMP to form dTDP in both de novo and salvage pathways of dTTP synthesis. The polypeptide is Thymidylate kinase (Thermosipho africanus (strain TCF52B)).